Here is an 81-residue protein sequence, read N- to C-terminus: Photosystem I iron-sulfur center (81 aa).

2 consecutive 4Fe-4S ferredoxin-type domains span residues 2 to 31 (SHSV…MIPW) and 39 to 68 (IASA…VRVY). [4Fe-4S] cluster-binding residues include Cys-11, Cys-14, Cys-17, Cys-21, Cys-48, Cys-51, Cys-54, and Cys-58.

The eukaryotic PSI reaction center is composed of at least 11 subunits. [4Fe-4S] cluster is required as a cofactor.

It localises to the plastid. The protein resides in the chloroplast thylakoid membrane. It catalyses the reaction reduced [plastocyanin] + hnu + oxidized [2Fe-2S]-[ferredoxin] = oxidized [plastocyanin] + reduced [2Fe-2S]-[ferredoxin]. Functionally, apoprotein for the two 4Fe-4S centers FA and FB of photosystem I (PSI); essential for photochemical activity. FB is the terminal electron acceptor of PSI, donating electrons to ferredoxin. The C-terminus interacts with PsaA/B/D and helps assemble the protein into the PSI complex. Required for binding of PsaD and PsaE to PSI. PSI is a plastocyanin-ferredoxin oxidoreductase, converting photonic excitation into a charge separation, which transfers an electron from the donor P700 chlorophyll pair to the spectroscopically characterized acceptors A0, A1, FX, FA and FB in turn. This is Photosystem I iron-sulfur center from Phaseolus vulgaris (Kidney bean).